The primary structure comprises 274 residues: tRNA dimethylallyltransferase (274 aa).

An interaction with substrate tRNA region spans residues 9-12; sequence DSLS.

Belongs to the IPP transferase family. In terms of assembly, monomer. The cofactor is Mg(2+).

The catalysed reaction is adenosine(37) in tRNA + dimethylallyl diphosphate = N(6)-dimethylallyladenosine(37) in tRNA + diphosphate. In terms of biological role, catalyzes the transfer of a dimethylallyl group onto the adenine at position 37 in tRNAs that read codons beginning with uridine, leading to the formation of N6-(dimethylallyl)adenosine (i(6)A). This is tRNA dimethylallyltransferase (miaA) from Helicobacter pylori (strain P12).